The following is a 159-amino-acid chain: Defense protein l(2)34Fc (159 aa).

Residues 1-17 (MFRLLVLAACLAISVHA) form the signal peptide. Positions 18-159 (YSDGAPKAAC…GRVTKDIDVE (142 aa)) constitute a Reelin domain. Cysteines 27 and 99 form a disulfide.

This sequence belongs to the insect defense protein family.

The protein localises to the secreted. Its function is as follows. May have antimicrobial activity. A late response immune regulated gene that is negatively regulated by spz during the immune response. This Drosophila melanogaster (Fruit fly) protein is Defense protein l(2)34Fc (l(2)34Fc).